Consider the following 65-residue polypeptide: Large ribosomal subunit protein bL35 (65 aa).

This sequence belongs to the bacterial ribosomal protein bL35 family.

In Synechococcus sp. (strain WH7803), this protein is Large ribosomal subunit protein bL35.